The chain runs to 436 residues: Serine--tRNA ligase (436 aa).

Residue 242 to 244 participates in L-serine binding; sequence TAE. 273-275 contributes to the ATP binding site; that stretch reads RSE. Glu-296 lines the L-serine pocket. 360–363 serves as a coordination point for ATP; it reads EISS. Ser-395 contacts L-serine.

Belongs to the class-II aminoacyl-tRNA synthetase family. Type-1 seryl-tRNA synthetase subfamily. In terms of assembly, homodimer. The tRNA molecule binds across the dimer.

The protein resides in the cytoplasm. The catalysed reaction is tRNA(Ser) + L-serine + ATP = L-seryl-tRNA(Ser) + AMP + diphosphate + H(+). The enzyme catalyses tRNA(Sec) + L-serine + ATP = L-seryl-tRNA(Sec) + AMP + diphosphate + H(+). It functions in the pathway aminoacyl-tRNA biosynthesis; selenocysteinyl-tRNA(Sec) biosynthesis; L-seryl-tRNA(Sec) from L-serine and tRNA(Sec): step 1/1. Functionally, catalyzes the attachment of serine to tRNA(Ser). Is also able to aminoacylate tRNA(Sec) with serine, to form the misacylated tRNA L-seryl-tRNA(Sec), which will be further converted into selenocysteinyl-tRNA(Sec). The sequence is that of Serine--tRNA ligase from Polynucleobacter asymbioticus (strain DSM 18221 / CIP 109841 / QLW-P1DMWA-1) (Polynucleobacter necessarius subsp. asymbioticus).